Here is a 226-residue protein sequence, read N- to C-terminus: Uracil-DNA glycosylase (226 aa).

The active-site Proton acceptor is the D65.

This sequence belongs to the uracil-DNA glycosylase (UDG) superfamily. UNG family.

The protein resides in the cytoplasm. The enzyme catalyses Hydrolyzes single-stranded DNA or mismatched double-stranded DNA and polynucleotides, releasing free uracil.. In terms of biological role, excises uracil residues from the DNA which can arise as a result of misincorporation of dUMP residues by DNA polymerase or due to deamination of cytosine. The sequence is that of Uracil-DNA glycosylase from Bacillus pumilus (strain SAFR-032).